A 78-amino-acid polypeptide reads, in one-letter code: uncharacterized protein (78 aa).

The disordered stretch occupies residues 1 to 28 (MGGGNAQKSAMARAKNLEKAKAAGKGSQ).

This is an uncharacterized protein from Arabidopsis thaliana (Mouse-ear cress).